We begin with the raw amino-acid sequence, 2379 residues long: MESQIRYIDELIAGFNGSCKIERVNEGNCAAQSSNTEERKLIQAVQALLRILNDLNHNSADLIFQKCLGGLDRILHHNPYIMALSISSEDSGNLMIMDLIDKMLGLTERCSYNIHRMWYIRRNIIRWITSSTRLFGSDFKRIINLKIKKILNELETKCKLFLFTHQNVEPQEFISTLTLLHTILYWISADSNKLGDYFYWIQGSSSLNEWDLHFQKYIRIAMYLFTSFQIKIDANSSYFEKFNLLQANFIMLVANYQTSRTLSGGFNSIAISIQHLKFTLEVISEFMRNRSFLSKNETLITKSLLKIYYLSVCKASSNKNDILSIFLDYIPVVECINSKHQFNENYDSELERSLLLLYFDMKRRYADPDELQFIDSFDIWSHPDCIDEVSIITQPIKKNSKQIEKLQRSILKSYTVNIKQIHSFLFKELNSLEPGILDRNGDHYKAVVKEISISIKRSLKIRDSKKIITWLRVLSRMACIEDKLINTKQNISEFFHTTNDFCNYCDSIHDGNFLNNIEPSRPLAQDQSEIFSMINKYFILNPDLKKFSMSIKCGLFIVIERIFAHFQPTALMNENNQIAPLFSFIEDSFIDSDRHVRLLICKILPLWNTSNHNNSEDEMSMHLIQFLQKVNSPLLLETVVLSWSKITLTTHGDVFDTLLLKLIDLFNSNNFTLHIMMKEQLIRMSSLLNKTPYQLLSPVLPIILRQLSKNLNEKKLSFQRLCDLVGYTGKVILDIFQKYVIPYATVQYKSDVFSEVAKIMCDDDTSMLLQQKHNLLTKNSRQIFAVALVKHGFFSLDTMETLFLNRVPSYDRRYIGAYLPDYKTLAEVTKLYKNNEITDSSDIENENMVLCSLRYLITNFESDKRHGTEYKDINKWSDKKENQFQNNLQDNILGIFQVFSSDMHDVEGKTTYYEKLRVINGISFLVKHASNKCIISALAQLSICLQSGLEIPEVRYLSMRCWFLLIQRLNEEELTTVIDAPVAFILRKWPTFNKKLQLKALEVLTALIRTKNSLLMKMKPYISISLLSNESIPILDIDTNFSRQAARLRNTIDLVPIFVKNLQSNNKFVIEQNLDDIKFHLKRRQGELLQYDKYGNLQLNAVPSLIGALLEVAHKYRTIDHEICKKCAKCISMVGVPDIRRIDLRGDRKEKWKVFDFNDYSKTTEFLIWLIDDILVPSFWQSENPNKQLFFALVMQESLKYCGLSSQSWDINEPDKFPEQLELWNKFNSISKTTLYPLLSSLYLAQSWKEYVPIKYPSLNFRDGYKTWIKNFTLDLLKTGTTEDHPLHVFSSLIREDDGSLSSFLLPYIAQDIIIKAQSGTEYESLMDNILIELQSVVTYEIDGLNHLQRDSLKMCYEAVFSILEYCKKWATMFRQDYNNANGTFLIKEDKYLKMLKRIDYFINSIPLDLLANKSLETNAFERSALYLEECYRHSDIHDRNLNSTLKSLQMTYEEIGDIDSIDGLLKSFASTSFETKIEELQYSNKWQMALECFDILADITKHDSTAQIMTKSMFDHHLYKNVIQTVPKLVPDNIQKLNESNTNLLIRALESSILEGDLKSIEKWSSKIELMTTINDPELTLQYNLGKALLSISKGNHIKAGQFLDNCYQITGIQYTSTSNSTTLLKTQSLLTKLHGLHDLNMLNFSKDDFELQSNMQLLDLRRGKVGPDFDPNYYILSIRKTFDKIHKNPITKTDLVDTYFAIAQEARVNSRLDIASKALIFCLEKGHPYSELEFAEILWKDGENDRALKLVREINQKNEKSSSVSVRNKAEVLLKYTEWLDISNNSASEQIITQYKNIFALEPEWEQPYYSIGLYFSRLLERRKAEGYVSDGKLEFKSISYFLLAFEKNTVKVRENLPKVITFWLDTAAAVITETSPNRNTILKKVTTDICKQIETAIRNCPTYIWYSVLTQLLSRLLHPHLSSAKLIMHILLSLAVEYPSHILWHISVLCQSNSSKRVKCGQDILEKFRAHSDNQEDIINSSIYLTSSLTRICLQEVKSSSSRSGRSLVSDFKFDVNIAPTPMTVPVRKNLEMISPLSAETMKSYQPFRPTVSIAKFASSYKIFSSLKKPKKITIIGSDGMLYEIMCKKEDVRQDNQYMQFAATMDFLLSKDLDSSKRDLGITVYSVLSLREDCGLLEIVPDVVTLRSIFTTKYESKKIKYSMKALYEKWQGLADELKPVFFNEQTKKFSPVLHEWFLENFPDPINWYRARNLYSRSYAVMAMVGYILGLGDRHCENILLDIKTGKVLHVDFDCLFEKGENLPVPEIVPFRLTQNLQDALGILGTEGTFKKSSEVTLSLMRQNEVALMNIIETIMYDRNMDHSIQKALRKLRNKIRGIDPRDGLLLSVSGQAETLIQEATSTENLSKMYIGWLPFW.

One can recognise an FAT domain in the interval 1410–1955 (LLANKSLETN…LWHISVLCQS (546 aa)). The PI3K/PI4K catalytic domain maps to 2060–2363 (FASSYKIFSS…QAETLIQEAT (304 aa)). The interval 2066–2072 (IFSSLKK) is G-loop. Positions 2232–2240 (GLGDRHCEN) are catalytic loop. Residues 2252 to 2276 (HVDFDCLFEKGENLPVPEIVPFRLT) form an activation loop region. Residues 2347 to 2379 (LLLSVSGQAETLIQEATSTENLSKMYIGWLPFW) enclose the FATC domain.

It belongs to the PI3/PI4-kinase family. ATM subfamily.

It localises to the nucleus. The enzyme catalyses L-seryl-[protein] + ATP = O-phospho-L-seryl-[protein] + ADP + H(+). It catalyses the reaction L-threonyl-[protein] + ATP = O-phospho-L-threonyl-[protein] + ADP + H(+). Its function is as follows. Serine/threonine protein kinase which activates checkpoint signaling upon genotoxic stresses such as ionizing radiation (IR), ultraviolet light (UV), or DNA replication stalling, thereby acting as a DNA damage sensor. Recognizes the substrate consensus sequence [ST]-Q. Recruited to DNA lesions in order to initiate the DNA repair by homologous recombination. Phosphorylates histone H2A to form H2AS128ph (gamma-H2A) at sites of DNA damage, also involved in the regulation of DNA damage response mechanism. Required for cell growth and meiotic recombination. The chain is Serine/threonine-protein kinase MEC1 (MEC1) from Candida glabrata (strain ATCC 2001 / BCRC 20586 / JCM 3761 / NBRC 0622 / NRRL Y-65 / CBS 138) (Yeast).